The primary structure comprises 379 residues: Probable pectin lyase A (379 aa).

A signal peptide spans 1–19; it reads MKFALLSGVAAGLLPVVSA. 2 disulfide bridges follow: C82-C101 and C91-C225. R255 is an active-site residue. C322 and C330 are oxidised to a cystine.

Belongs to the polysaccharide lyase 1 family.

It localises to the secreted. It catalyses the reaction Eliminative cleavage of (1-&gt;4)-alpha-D-galacturonan methyl ester to give oligosaccharides with 4-deoxy-6-O-methyl-alpha-D-galact-4-enuronosyl groups at their non-reducing ends.. Functionally, pectinolytic enzymes consist of four classes of enzymes: pectin lyase, polygalacturonase, pectin methylesterase and rhamnogalacturonase. Among pectinolytic enzymes, pectin lyase is the most important in depolymerization of pectin, since it cleaves internal glycosidic bonds of highly methylated pectins. This chain is Probable pectin lyase A (pelA), found in Aspergillus oryzae (strain ATCC 42149 / RIB 40) (Yellow koji mold).